We begin with the raw amino-acid sequence, 226 residues long: Killer cell lectin-like receptor subfamily E member 1 (226 aa).

The interval 1–28 (MDEAPVTRSTLNVNSQQKSKAKNKIKNT) is disordered. Topologically, residues 1–68 (MDEAPVTRST…GKGNCSPPWR (68 aa)) are cytoplasmic. Positions 7–18 (TRSTLNVNSQQK) are enriched in polar residues. A helical; Signal-anchor for type II membrane protein transmembrane segment spans residues 69-89 (LLSSVLGAMCLLLMAVAMVMT). The Extracellular portion of the chain corresponds to 90-226 (TFTTKSSSER…ANKLTYICKK (137 aa)). Disulfide bonds link Cys113/Cys124, Cys141/Cys224, and Cys202/Cys216. The C-type lectin domain occupies 120–225 (FRCSCYFFSK…CANKLTYICK (106 aa)). The N-linked (GlcNAc...) asparagine glycan is linked to Asn145.

Heterodimer; with KLRI1 or KLRI2. In terms of tissue distribution, expressed in natural killer (NK) cells (at protein level). Also detected in natural killer T (NKT) cells (at protein level). Has little or no expression in T cells (at protein level).

The protein resides in the cell membrane. Its function is as follows. Lectin-like receptor for natural killer (NK) cells. Can either inhibit or activate NK cell cytotoxic activity, depending on its binding partner. Heterodimer formation with KLRI1 mediates NK cell inhibition whereas heterodimer formation with KLRI2 mediates NK cell activation. Plays a role in allogeneic recognition by the immune system. The protein is Killer cell lectin-like receptor subfamily E member 1 of Mus musculus (Mouse).